The primary structure comprises 418 residues: UDP-N-acetylglucosamine 1-carboxyvinyltransferase (418 aa).

Phosphoenolpyruvate is bound at residue 22 to 23; the sequence is KN. A UDP-N-acetyl-alpha-D-glucosamine-binding site is contributed by Arg93. Cys117 (proton donor) is an active-site residue. Residue Cys117 is modified to 2-(S-cysteinyl)pyruvic acid O-phosphothioketal. UDP-N-acetyl-alpha-D-glucosamine is bound by residues Asp305 and Val327.

It belongs to the EPSP synthase family. MurA subfamily.

The protein resides in the cytoplasm. The enzyme catalyses phosphoenolpyruvate + UDP-N-acetyl-alpha-D-glucosamine = UDP-N-acetyl-3-O-(1-carboxyvinyl)-alpha-D-glucosamine + phosphate. Its pathway is cell wall biogenesis; peptidoglycan biosynthesis. Cell wall formation. Adds enolpyruvyl to UDP-N-acetylglucosamine. The chain is UDP-N-acetylglucosamine 1-carboxyvinyltransferase from Alkalilimnicola ehrlichii (strain ATCC BAA-1101 / DSM 17681 / MLHE-1).